The sequence spans 113 residues: Putative glycerol transporter Lin0367 (113 aa).

The next 4 helical transmembrane spans lie at 3-23, 30-50, 63-83, and 92-112; these read IGIA…IRMM, EWGA…VWTI, GTVW…ASLL, and VVNL…LSLF.

The protein resides in the membrane. Functionally, could be involved in the glycerol uptake either via facilitated diffusion or active transport. This is Putative glycerol transporter Lin0367 from Listeria innocua serovar 6a (strain ATCC BAA-680 / CLIP 11262).